Consider the following 408-residue polypeptide: PTI1-like tyrosine-protein kinase 3 (408 aa).

A compositionally biased stretch (basic and acidic residues) spans 59–76 (SSENEHLRSPKHHNDFGH). The tract at residues 59–91 (SSENEHLRSPKHHNDFGHHTRKPQAAVKPDALK) is disordered. The region spanning 113–395 (FGSKSLIGEG…IVVKALQPLL (283 aa)) is the Protein kinase domain. Residues 119–127 (IGEGSYGRA) and lysine 141 each bind ATP. The Proton acceptor role is filled by aspartate 245.

It belongs to the protein kinase superfamily. Tyr protein kinase family. As to quaternary structure, interacts with OXI1. In terms of processing, phosphorylated by OXI1.

The protein resides in the cell membrane. It catalyses the reaction L-tyrosyl-[protein] + ATP = O-phospho-L-tyrosyl-[protein] + ADP + H(+). This is PTI1-like tyrosine-protein kinase 3 (PTI13) from Arabidopsis thaliana (Mouse-ear cress).